The primary structure comprises 437 residues: Epsilon-sarcoglycan (437 aa).

The Extracellular portion of the chain corresponds to 1-317 (MQLPRWWELG…LKSRDYYTDF (317 aa)). N200 carries an N-linked (GlcNAc...) asparagine glycan. Residues 318–338 (LITLAVPSAVALVLFLILAYI) traverse the membrane as a helical segment. The Cytoplasmic portion of the chain corresponds to 339–437 (MCCRREGVEK…QQQTTGKWYP (99 aa)).

The protein belongs to the sarcoglycan alpha/epsilon family. N-glycosylated. Post-translationally, ubiquitinated, leading to its degradation by the proteasome. In terms of tissue distribution, ubiquitous.

The protein resides in the cell membrane. It is found in the sarcolemma. Its subcellular location is the cytoplasm. The protein localises to the cytoskeleton. It localises to the cell projection. The protein resides in the dendrite. It is found in the golgi apparatus. In terms of biological role, component of the sarcoglycan complex, a subcomplex of the dystrophin-glycoprotein complex which forms a link between the F-actin cytoskeleton and the extracellular matrix. This Homo sapiens (Human) protein is Epsilon-sarcoglycan (SGCE).